Reading from the N-terminus, the 1295-residue chain is MMEILRGSPALSAFRINKLLARFQAARLPVHTIYAEYVHFADLNAPLNDDEHAQLERLLKYGPALASHAPQGKLLLVTPRPGTISPWSSKATDIAHNCGLQQVNRLERGVAYYIEAGTLTNEQWQQVTAELHDRMMETVFFALDDAEQLFAHHQPTPVTSVDLLGQGRQALIDANLRLGLALAEDEIDYLQDAFTKLGRNPNDIELYMFAQANSEHCRHKIFNADWVIDGEQQPKSLFKMIKNTFETTPDHVLSAYKDNAAVMEGSEVGRYFADHETGRYDFHQEPAHILMKVETHNHPTAISPWPGAATGSGGEIRDEGATGRGAKPKAGLVGFSVSNLRIPGFEQPWEEDFGKPERIVTALDIMTEGPLGGAAFNNEFGRPALNGYFRTYEEKVNSHNGEELRGYHKPIMLAGGIGNIRADHVQKGEINVGAKLVVLGGPAMNIGLGGGAASSMASGQSDADLDFASVQRDNPEMERRCQEVIDRCWQLGDANPILFIHDVGAGGLSNAMPELVSDGGRGGKFELRDILSDEPGMSPLEIWCNESQERYVLAVAADQLPLFDELCKRERAPYAVIGEATEELHLSLHDRHFDNQPIDLPLDVLLGKTPKMTRDVQTLKAKGDALAREGITIADAVKRVLHLPTVAEKTFLVTIGDRSVTGMVARDQMVGPWQVPVANCAVTTASLDSYYGEAMAIGERAPVALLDFAASARLAVGEALTNIAATQIGDIKRIKLSANWMAAAGHPGEDAGLYEAVKAVGEELCPALGLTIPVGKDSMSMKTRWQEGNEECEMTSPLSLVISAFARVEDVRHTITPQLSTEDNALLLIDLGKGNNALGATALAQVYRQLGDKPADVRDVAQLKGFYDAIQALVAQRKLLAYHDRSDGGLLVTLAEMAFAGHCGIDADIATLGDDRLAALFSEELGAVIQVRAADREAVEAVLAQHGLADCVHYVGQAVSGDRFVITANGQTVFSESRTTLRVWWAETTWQMQRLRDNPECADQEHQAKSNDADPGLNVKLSFDINEDVAAPFIATGARPKVAVLREQGVNSHVEMAAAFHRAGFDAIDVHMSDLLAGRTGLEGFHALVACGGFSYGDVLGAGEGWAKSILFNDRVRDEFATFFHRPQTLALGVCNGCQMMSNLRELIPGSELWPRFVRNTSDRFEARFSLVEVTQSPSLLLQGMVGSQMPIAVSHGEGRVEVRDAAHLAALESKGLVALRYVDNFGKVTETYPANPNGSPNGITAVTTESGRVTIMMPHPERVFRTVSNSWHPENWGEDGPWMRIFRNARKQLG.

The disordered stretch occupies residues 305 to 327; the sequence is WPGAATGSGGEIRDEGATGRGAK. ATP contacts are provided by residues 307–318 and alanine 678; that span reads GAATGSGGEIRD. Residues glutamate 718, asparagine 722, and aspartate 884 each contribute to the Mg(2+) site. Serine 886 lines the ATP pocket. A Glutamine amidotransferase type-1 domain is found at 1042-1295; that stretch reads VAVLREQGVN…IFRNARKQLG (254 aa). Cysteine 1135 acts as the Nucleophile in catalysis. Active-site residues include histidine 1260 and glutamate 1262.

It in the N-terminal section; belongs to the FGAMS family. As to quaternary structure, monomer.

Its subcellular location is the cytoplasm. The enzyme catalyses N(2)-formyl-N(1)-(5-phospho-beta-D-ribosyl)glycinamide + L-glutamine + ATP + H2O = 2-formamido-N(1)-(5-O-phospho-beta-D-ribosyl)acetamidine + L-glutamate + ADP + phosphate + H(+). It functions in the pathway purine metabolism; IMP biosynthesis via de novo pathway; 5-amino-1-(5-phospho-D-ribosyl)imidazole from N(2)-formyl-N(1)-(5-phospho-D-ribosyl)glycinamide: step 1/2. Functionally, phosphoribosylformylglycinamidine synthase involved in the purines biosynthetic pathway. Catalyzes the ATP-dependent conversion of formylglycinamide ribonucleotide (FGAR) and glutamine to yield formylglycinamidine ribonucleotide (FGAM) and glutamate. The polypeptide is Phosphoribosylformylglycinamidine synthase (Escherichia coli O6:K15:H31 (strain 536 / UPEC)).